Here is a 143-residue protein sequence, read N- to C-terminus: MAKKIVGYIKLQVPAGKANPSPPIGPALGQRGLNIMEFCKAFNAATQKMEVGLPVPVVITAYADKSFTFTMKTTPATVLIKKAAGVGKGSAKPHTDKIGRLTRKQMEEIAQIKMPDLTAADMDAAVRTIAGSARSMGIEVEGA.

Belongs to the universal ribosomal protein uL11 family. Part of the ribosomal stalk of the 50S ribosomal subunit. Interacts with L10 and the large rRNA to form the base of the stalk. L10 forms an elongated spine to which L12 dimers bind in a sequential fashion forming a multimeric L10(L12)X complex. Post-translationally, one or more lysine residues are methylated.

In terms of biological role, forms part of the ribosomal stalk which helps the ribosome interact with GTP-bound translation factors. The chain is Large ribosomal subunit protein uL11 from Nitrosospira multiformis (strain ATCC 25196 / NCIMB 11849 / C 71).